A 580-amino-acid polypeptide reads, in one-letter code: Keratin, type II cytoskeletal 5 (580 aa).

The interval 1–161 is head; sequence MSRQSSVSFR…DPTIQRVRTE (161 aa). Phosphoserine occurs at positions 5, 8, 16, and 21. Phosphothreonine; by CDK1 is present on T24. 8 positions are modified to phosphoserine: S26, S36, S47, S61, S68, S72, S75, and S79. At T145 the chain carries Phosphothreonine; by CDK1. T160 bears the Phosphothreonine; by AURKB mark. A coil 1A region spans residues 162–197; the sequence is EREQIKTLNNKFASFIDKVRFLEQQNKVLDTKWALL. Residues 162 to 475 enclose the IF rod domain; the sequence is EREQIKTLNN…KLLEGEECRL (314 aa). A linker 1 region spans residues 198–216; sequence QEQGTKTIKQNLDPLFEQY. The coil 1B stretch occupies residues 217–309; sequence INNLRRQLDG…FFDAELSQMQ (93 aa). Residues 310–332 are linker 12; it reads THVSDTSVVLSMDNNRSLDLDSI. Residues 333–471 are coil 2; the sequence is IAEVKAQYED…ATYRKLLEGE (139 aa). A tail region spans residues 472 to 580; sequence ECRLSGEGVG…TSSSRRSFKS (109 aa). R526 bears the Omega-N-methylarginine mark. Positions 555-580 are disordered; the sequence is FGSGGGSGSSVKFVSTTSSSRRSFKS. Residues 563–580 are compositionally biased toward low complexity; it reads SSVKFVSTTSSSRRSFKS.

The protein belongs to the intermediate filament family. As to quaternary structure, heterodimer of a type I and a type II keratin. Heterodimer with type I keratin KRT25 leading to the formation of keratin intermediate filament (KIF) network. Forms a heterodimer (via 2B domains) with KRT14 (via 2B domains). Interacts with PLEC isoform 1C, when in a heterodimer with KRT14. Interacts with TCHP. Interacts with EPPK1. Interacts with AMELX. Interacts with PKP1 (via N-terminus) and PKP2. Post-translationally, phosphorylated by CDK1, AURKB and Rho-kinase, phosphorylation is regulated by the cell cycle. Thr-24 phosphorylation, mediated by CDK1, peaks during prometaphase or metaphase cells with phosphorylated filamentous structures evident throughout the cytoplasm during early mitosis. CDK1 phosphorylates Thr-24 in mitotic cells at the site of injury. O-glycosylated. Expressed in the corneal epithelium (at protein level). Expressed in the epidermis of the ear (at protein level). Expressed in the basal and spinous layers of the skin at birth (at protein level).

It localises to the cytoplasm. Functionally, required for the formation of keratin intermediate filaments in the basal epidermis and maintenance of the skin barrier in response to mechanical stress. Regulates the recruitment of Langerhans cells to the epidermis, potentially by modulation of the abundance of macrophage chemotactic cytokines, macrophage inflammatory cytokines and CTNND1 localization in keratinocytes. This Mus musculus (Mouse) protein is Keratin, type II cytoskeletal 5.